Reading from the N-terminus, the 77-residue chain is Conotoxin G11.1 (77 aa).

The signal sequence occupies residues 1 to 20 (MKLFLAIVLILMLQFLSTGA). The propeptide occupies 21–45 (ETSDNHASRSTTALRDWLLGPKAKR). 4 disulfide bridges follow: Cys46-Cys60, Cys53-Cys65, Cys59-Cys69, and Cys64-Cys76.

This sequence belongs to the conotoxin I3 superfamily. In terms of tissue distribution, expressed by the venom duct.

The protein localises to the secreted. May embed in the membrane and bind to the voltage sensor domain of a ion channel. Does not induce paralysis when injected in fish, leading to the hypothesis that it may be part of the sedative nirvana cabal. This Conus geographus (Geography cone) protein is Conotoxin G11.1.